We begin with the raw amino-acid sequence, 98 residues long: Flagellar hook-basal body complex protein FliE (98 aa).

Over residues 1–23 (MNNINDLRLNNNISNTNKSQNST) the composition is skewed to low complexity. Positions 1 to 24 (MNNINDLRLNNNISNTNKSQNSTG) are disordered.

It belongs to the FliE family.

It localises to the bacterial flagellum basal body. In Campylobacter jejuni subsp. jejuni serotype O:2 (strain ATCC 700819 / NCTC 11168), this protein is Flagellar hook-basal body complex protein FliE.